Here is a 209-residue protein sequence, read N- to C-terminus: Chloramphenicol acetyltransferase (209 aa).

Histidine 189 acts as the Proton acceptor in catalysis.

This sequence belongs to the chloramphenicol acetyltransferase family. In terms of assembly, homotrimer.

The enzyme catalyses chloramphenicol + acetyl-CoA = chloramphenicol 3-acetate + CoA. In terms of biological role, this enzyme is an effector of chloramphenicol resistance in bacteria. The chain is Chloramphenicol acetyltransferase from Staphylococcus aureus.